Here is a 293-residue protein sequence, read N- to C-terminus: MATARPPWMWVLCALITALLLGVTEHVLANNDVSCDHPSNTVPSGSNQDLGAGAGEDARSDDSSSRIINGSDCDMHTQPWQAALLLRPNQLYCGAVLVHPQWLLTAAHCRKKVFRVRLGHYSLSPVYESGQQMFQGVKSIPHPGYSHPGHSNDLMLIKLNRRIRPTKDVRPINVSSHCPSAGTKCLVSGWGTTKSPQVHFPKVLQCLNISVLSQKRCEDAYPRQIDDTMFCAGDKAGRDSCQGDSGGPVVCNGSLQGLVSWGDYPCARPNRPGVYTNLCKFTKWIQETIQANS.

The first 22 residues, 1–22 (MATARPPWMWVLCALITALLLG), serve as a signal peptide directing secretion. The segment covering 37–49 (HPSNTVPSGSNQD) has biased composition (polar residues). The interval 37 to 68 (HPSNTVPSGSNQDLGAGAGEDARSDDSSSRII) is disordered. In terms of domain architecture, Peptidase S1 spans 67 to 290 (IINGSDCDMH…FTKWIQETIQ (224 aa)). Residue N69 is glycosylated (N-linked (GlcNAc...) asparagine). 6 disulfide bridges follow: C73-C206, C93-C109, C178-C279, C185-C251, C217-C231, and C241-C266. Active-site charge relay system residues include H108 and D153. Residues N173 and N208 are each glycosylated (N-linked (GlcNAc...) asparagine). The Charge relay system role is filled by S245. The N-linked (GlcNAc...) asparagine glycan is linked to N252.

It belongs to the peptidase S1 family. Kallikrein subfamily. In terms of assembly, interacts with SPINK9. In terms of tissue distribution, expressed in skin, breast, brain and testis. Expressed at the stratum granulosum of palmar skin.

The protein resides in the secreted. Its activity is regulated as follows. Inhibited by Zn2+. Functionally, may be involved in desquamation. This is Kallikrein-5 from Homo sapiens (Human).